A 150-amino-acid polypeptide reads, in one-letter code: D-aminoacyl-tRNA deacylase (150 aa).

Positions 138–139 (GP) match the Gly-cisPro motif, important for rejection of L-amino acids motif.

It belongs to the DTD family. As to quaternary structure, homodimer.

The protein resides in the cytoplasm. The catalysed reaction is glycyl-tRNA(Ala) + H2O = tRNA(Ala) + glycine + H(+). It carries out the reaction a D-aminoacyl-tRNA + H2O = a tRNA + a D-alpha-amino acid + H(+). Its function is as follows. An aminoacyl-tRNA editing enzyme that deacylates mischarged D-aminoacyl-tRNAs. Also deacylates mischarged glycyl-tRNA(Ala), protecting cells against glycine mischarging by AlaRS. Acts via tRNA-based rather than protein-based catalysis; rejects L-amino acids rather than detecting D-amino acids in the active site. By recycling D-aminoacyl-tRNA to D-amino acids and free tRNA molecules, this enzyme counteracts the toxicity associated with the formation of D-aminoacyl-tRNA entities in vivo and helps enforce protein L-homochirality. This chain is D-aminoacyl-tRNA deacylase, found in Opitutus terrae (strain DSM 11246 / JCM 15787 / PB90-1).